Here is a 608-residue protein sequence, read N- to C-terminus: MADGVEEGNAVAPRGPARRRGTVRASLDADEFIALMHGSDPVRVELTRLENELRDKERELGEAQTEIRALRLSERAREKAVEELTDELEKMFEKLKLTESLLDSKNLEVKKINDEKKAAMAAQFAAEATLRRVHAAQKDDDMPPIEAILAPLEAELKLARQEIAKLQDDNRALDRLTKQKEAALLDAERTVEIAMAKAAMVDDLQNKNQELMKQIEICHEENKILDKLQRQKVAEVKKLSLTVKELEEAVLRGGATANVVRDYQRQVQEVNDQKKTLECELARAKVTANRVAVVVANEWKDSNDKVMPVKQWLEERRFLQGEMQQLRDKLAVAERTARSEAQLKEKYQLRLKVLEDGLRGPPSGSSRLPTEGKSFSNGPSRRLSLGGADNMSKLSPNGLLARRSPSFHSRSSLSSSSSLVLKHAKGTSKSFDGGTRSLDRSKINGNGAHLLNRSTDAVRDCETNDSWKGNADEGTIENTNSNTDESNKETANNKSAEMVSGFLYDMLQKEVISLRKACHEKDQSLKDKDDAIEMLAKKVDTLTKAMEVEAKKMRREVAAMEKEVAAMRVDKEQEVKARRLGSSKGTGSSQVLSGSRSSSRSGLTRNYQ.

A disordered region spans residues 1-23 (MADGVEEGNAVAPRGPARRRGTV). The stretch at 40–346 (DPVRVELTRL…ARSEAQLKEK (307 aa)) forms a coiled coil. Residues 224-458 (ILDKLQRQKV…HLLNRSTDAV (235 aa)) form a required for targeting to microtubules region. 2 disordered regions span residues 354–493 (LEDG…TANN) and 570–608 (DKEQEVKARRLGSSKGTGSSQVLSGSRSSSRSGLTRNYQ). The span at 363–379 (SGSSRLPTEGKSFSNGP) shows a compositional bias: polar residues. A compositionally biased stretch (low complexity) spans 402-421 (RRSPSFHSRSSLSSSSSLVL). Residues 476–493 (IENTNSNTDESNKETANN) are compositionally biased toward polar residues. Residues 542–576 (LTKAMEVEAKKMRREVAAMEKEVAAMRVDKEQEVK) adopt a coiled-coil conformation. Low complexity predominate over residues 586-608 (TGSSQVLSGSRSSSRSGLTRNYQ).

The protein belongs to the MAP70 family.

The protein localises to the cytoplasm. The protein resides in the cytoskeleton. Functionally, plant-specific protein that interact with microtubules. The protein is Microtubule-associated protein 70-3 (MAP70.3) of Oryza sativa subsp. japonica (Rice).